The primary structure comprises 298 residues: Biphenyl-2,3-diol 1,2-dioxygenase (298 aa).

2 consecutive VOC domains span residues 5 to 119 (SLGY…IYYG) and 143 to 264 (GLGH…YGWS). Fe cation contacts are provided by H146, H210, and E260.

It belongs to the extradiol ring-cleavage dioxygenase family. In terms of assembly, homooctamer. The enzyme is composed of two planar tetramers rotated at 45 degrees relative to each other, with a channel in the middle. Fe(2+) is required as a cofactor.

The catalysed reaction is biphenyl-2,3-diol + O2 = 2-hydroxy-6-oxo-6-phenylhexa-2,4-dienoate + H(+). Its pathway is xenobiotic degradation; biphenyl degradation; 2-hydroxy-2,4-pentadienoate and benzoate from biphenyl: step 3/4. Its function is as follows. Shows a preference for catechols with groups immediately adjacent to the hydroxyl substituents. This Paraburkholderia xenovorans (strain LB400) protein is Biphenyl-2,3-diol 1,2-dioxygenase (bphC).